The following is a 424-amino-acid chain: Multifunctional CCA protein (424 aa).

ATP is bound by residues Gly8 and Arg11. Positions 8 and 11 each coordinate CTP. Residues Asp21 and Asp23 each contribute to the Mg(2+) site. ATP contacts are provided by Arg91, Arg149, and Arg152. Residues Arg91, Arg149, and Arg152 each contribute to the CTP site. Positions 238–339 constitute an HD domain; sequence TGIHLMMVLD…VRLLERCDAF (102 aa).

The protein belongs to the tRNA nucleotidyltransferase/poly(A) polymerase family. Bacterial CCA-adding enzyme type 1 subfamily. As to quaternary structure, monomer. Can also form homodimers and oligomers. The cofactor is Mg(2+). It depends on Ni(2+) as a cofactor.

It carries out the reaction a tRNA precursor + 2 CTP + ATP = a tRNA with a 3' CCA end + 3 diphosphate. The enzyme catalyses a tRNA with a 3' CCA end + 2 CTP + ATP = a tRNA with a 3' CCACCA end + 3 diphosphate. Catalyzes the addition and repair of the essential 3'-terminal CCA sequence in tRNAs without using a nucleic acid template. Adds these three nucleotides in the order of C, C, and A to the tRNA nucleotide-73, using CTP and ATP as substrates and producing inorganic pyrophosphate. tRNA 3'-terminal CCA addition is required both for tRNA processing and repair. Also involved in tRNA surveillance by mediating tandem CCA addition to generate a CCACCA at the 3' terminus of unstable tRNAs. While stable tRNAs receive only 3'-terminal CCA, unstable tRNAs are marked with CCACCA and rapidly degraded. The polypeptide is Multifunctional CCA protein (Polaromonas naphthalenivorans (strain CJ2)).